The primary structure comprises 495 residues: B3 domain-containing protein Os01g0234100 (495 aa).

2 disordered regions span residues 1–25 and 88–108; these read MAID…KMEQ and PGIP…NTTE. The segment covering 92–108 has biased composition (polar residues); sequence QTCNTQNTSNGRTNTTE. Positions 152–243 form a DNA-binding region, TF-B3; sequence FVKHMLHSHV…KFKVHIIRDK (92 aa). The segment covering 268–282 has biased composition (basic and acidic residues); sequence EATDNATKPKEDPET. The disordered stretch occupies residues 268 to 289; sequence EATDNATKPKEDPETTRVSSKV.

Its subcellular location is the nucleus. This is B3 domain-containing protein Os01g0234100 from Oryza sativa subsp. japonica (Rice).